A 244-amino-acid polypeptide reads, in one-letter code: Carboxy-S-adenosyl-L-methionine synthase (244 aa).

S-adenosyl-L-methionine contacts are provided by residues Tyr-41, 66–68 (GCS), 91–92 (DN), Asn-134, and Arg-201.

Belongs to the class I-like SAM-binding methyltransferase superfamily. Cx-SAM synthase family. Homodimer.

The enzyme catalyses prephenate + S-adenosyl-L-methionine = carboxy-S-adenosyl-L-methionine + 3-phenylpyruvate + H2O. In terms of biological role, catalyzes the conversion of S-adenosyl-L-methionine (SAM) to carboxy-S-adenosyl-L-methionine (Cx-SAM). This chain is Carboxy-S-adenosyl-L-methionine synthase, found in Colwellia psychrerythraea (strain 34H / ATCC BAA-681) (Vibrio psychroerythus).